A 227-amino-acid polypeptide reads, in one-letter code: PKHD-type hydroxylase Bxeno_B2756 (227 aa).

Residues 80–179 (QVYPPLFNRY…RVASFFWVQS (100 aa)) form the Fe2OG dioxygenase domain. His98, Asp100, and His160 together coordinate Fe cation. Arg170 is a binding site for 2-oxoglutarate.

Fe(2+) serves as cofactor. It depends on L-ascorbate as a cofactor.

This is PKHD-type hydroxylase Bxeno_B2756 from Paraburkholderia xenovorans (strain LB400).